Reading from the N-terminus, the 287-residue chain is 2-dehydro-3-deoxyphosphooctonate aldolase (287 aa).

It belongs to the KdsA family.

It localises to the cytoplasm. The enzyme catalyses D-arabinose 5-phosphate + phosphoenolpyruvate + H2O = 3-deoxy-alpha-D-manno-2-octulosonate-8-phosphate + phosphate. It functions in the pathway carbohydrate biosynthesis; 3-deoxy-D-manno-octulosonate biosynthesis; 3-deoxy-D-manno-octulosonate from D-ribulose 5-phosphate: step 2/3. It participates in bacterial outer membrane biogenesis; lipopolysaccharide biosynthesis. The protein is 2-dehydro-3-deoxyphosphooctonate aldolase of Rhodopseudomonas palustris (strain BisB5).